Reading from the N-terminus, the 176-residue chain is Alkyl hydroperoxide reductase AhpD (176 aa).

Residue C131 is the Proton donor of the active site. An intrachain disulfide couples C131 to C134. C134 (cysteine sulfenic acid (-SOH) intermediate) is an active-site residue.

Belongs to the AhpD family.

It carries out the reaction N(6)-[(R)-dihydrolipoyl]-L-lysyl-[lipoyl-carrier protein] + a hydroperoxide = N(6)-[(R)-lipoyl]-L-lysyl-[lipoyl-carrier protein] + an alcohol + H2O. Functionally, antioxidant protein with alkyl hydroperoxidase activity. Required for the reduction of the AhpC active site cysteine residues and for the regeneration of the AhpC enzyme activity. The polypeptide is Alkyl hydroperoxide reductase AhpD (Methylobacterium sp. (strain 4-46)).